Here is a 90-residue protein sequence, read N- to C-terminus: Putative membrane protein insertion efficiency factor (90 aa).

The protein belongs to the UPF0161 family.

The protein localises to the cell membrane. In terms of biological role, could be involved in insertion of integral membrane proteins into the membrane. This is Putative membrane protein insertion efficiency factor from Lactococcus lactis subsp. cremoris (strain MG1363).